A 198-amino-acid chain; its full sequence is Peptidyl-tRNA hydrolase (198 aa).

Tyrosine 18 provides a ligand contact to tRNA. Residue histidine 23 is the Proton acceptor of the active site. The tRNA site is built by tyrosine 69, asparagine 71, and asparagine 117.

Belongs to the PTH family. As to quaternary structure, monomer.

Its subcellular location is the cytoplasm. It catalyses the reaction an N-acyl-L-alpha-aminoacyl-tRNA + H2O = an N-acyl-L-amino acid + a tRNA + H(+). Hydrolyzes ribosome-free peptidyl-tRNAs (with 1 or more amino acids incorporated), which drop off the ribosome during protein synthesis, or as a result of ribosome stalling. Functionally, catalyzes the release of premature peptidyl moieties from peptidyl-tRNA molecules trapped in stalled 50S ribosomal subunits, and thus maintains levels of free tRNAs and 50S ribosomes. This Aeromonas hydrophila subsp. hydrophila (strain ATCC 7966 / DSM 30187 / BCRC 13018 / CCUG 14551 / JCM 1027 / KCTC 2358 / NCIMB 9240 / NCTC 8049) protein is Peptidyl-tRNA hydrolase.